Reading from the N-terminus, the 1178-residue chain is MDSNPCQDVSGDTSSTPMANNNPTNDSTISSQNHSKIGLRKHQQQHYHQHSHSQMHSHSQQSPYINQLEYFTNNQFSRSFNSLILEDANDANTNNSSTTTLNKKTINKSPPFNIKQDLLNDSIDTFLDNSNTETIEDGDVTTTDDDHDFDDEDIEDPEAVQYTPTLNILKSKKVDSFDIISSKHRKSNSQITYNSHVRKPSEEDTSSSMATIRLSNNSQSSIKRSSKYLNLSIDSNLKTVDGGKIPDEIDDISLNEIDVAVAPNDFSSPLSARKPDIFAAITAANGNSNNQFKRPHKLVSQSPSPSSKNKFRISSSTTSSPQSNLHSPSKLGSKGFKMFKNANRDAIMSSSRVMTPEKPKMVSKIFGKSAKIRRAYTPTHTSTPMAVSSLNPPSSSTSNSTTAAITSTSPPANEHYDIDNDFDSPSKNRKSSNISASSIIIYQDENHIKSNHARKSSNPIPYPPTEPLPTNISASVAETGKGSTTTKSNLSKGCPLFDDKENKASYQFVKPLQTAFNSSGLVKKNSISGSSDRKLPPETPIKRNPLMILNTNKVVPPYSSGFAEGKDVMGDQHDIYSHIPCQNQRFPGSVNPNTTTNNNNTQQHHDSDLSIEVGRNNSYDASSSTINNTSYIKIFPSSELKKEQVLQRPQEDLELVFNSDIELDDNIIPETPTKKSLLPNQHHQHHLPLYTQSKSPLLKFDTEKDGRRNLSIVLDKSNATKREISEPPSTPINMSFAKNSFKKPMNNAERGDDPDSIIAQRIDIMPSLDEADSVSVYPSKIDEHLIEKFGMKNIKYIGSGAFSIAFECLFNNEKFAIKRTKKPLIGKLEKQTIKREIEALRVLTSIKEDEATNMQEQEEGKEYLVYFIEAWDFNNYYYIMTEFCEGGTLFDFLEENKHYKIDEFRIWKILIEILNGLKFIHSKNYLHLDLKPANIFITFEGSLKIGDFGLATKLPILEKDFDLEGDRNYIAPELINDKIYTPFADIFSLGLIILEIAANIILPDNGTPWRKLRSGDLSDAGRLSSDNISMFLQHNPNTNSNISGSGSRSGSGSTGGNGSAGDGSTNSTNFSYNSLSGNSLTLNPPVKAVHGTSDTNNTLASELSKNIEGLIPSWAPDFLVHGDSMNLDKLVNKMLRPNPFDRPSACNILEMPECLIVENRRKCGATIFEGEFGSPPDE.

Over residues 1-35 (MDSNPCQDVSGDTSSTPMANNNPTNDSTISSQNHS) the composition is skewed to polar residues. Disordered regions lie at residues 1 to 61 (MDSN…HSQQ), 188 to 209 (NSQITYNSHVRKPSEEDTSSSM), 288 to 336 (SNNQ…SKGF), 378 to 434 (PTHT…SSNI), 451 to 473 (NHARKSSNPIPYPPTEPLPTNIS), 524 to 543 (KNSISGSSDRKLPPETPIKR), 584 to 606 (QRFPGSVNPNTTTNNNNTQQHHD), and 721 to 754 (KREISEPPSTPINMSFAKNSFKKPMNNAERGDDP). Basic residues predominate over residues 37–55 (IGLRKHQQQHYHQHSHSQM). Residues 299-308 (VSQSPSPSSK) show a composition bias toward polar residues. Over residues 388–413 (SSLNPPSSSTSNSTTAAITSTSPPAN) the composition is skewed to low complexity. Over residues 591-601 (NPNTTTNNNNT) the composition is skewed to low complexity. In terms of domain architecture, Protein kinase spans 791-1154 (MKNIKYIGSG…ACNILEMPEC (364 aa)). ATP is bound by residues 797-805 (IGSGAFSIA) and Lys-818. Asp-929 functions as the Proton acceptor in the catalytic mechanism. Asn-934 and Asp-947 together coordinate Mg(2+). The disordered stretch occupies residues 1034-1068 (HNPNTNSNISGSGSRSGSGSTGGNGSAGDGSTNST). The segment covering 1037–1046 (NTNSNISGSG) has biased composition (low complexity). Over residues 1047–1061 (SRSGSGSTGGNGSAG) the composition is skewed to gly residues.

This sequence belongs to the protein kinase superfamily. Ser/Thr protein kinase family. WEE1 subfamily. In terms of processing, phosphorylated.

Its subcellular location is the bud neck. The protein localises to the nucleus. It carries out the reaction L-seryl-[protein] + ATP = O-phospho-L-seryl-[protein] + ADP + H(+). The enzyme catalyses L-threonyl-[protein] + ATP = O-phospho-L-threonyl-[protein] + ADP + H(+). Protein kinase that acts as a negative regulator of entry into mitosis (G2 to M transition) by phosphorylating and inhibiting the mitosis-promoting cyclin B-bound CDC28 at 'Tyr-18'. SWE1-mediated inhibition of CDC28 acts in a cell size or morphogenesis checkpoint to delay mitosis in response to defects in growth, actin organization or bud formation. Plays an important role in filamentous growth. This chain is Mitosis inhibitor protein kinase SWE1 (SWE1), found in Candida albicans (strain SC5314 / ATCC MYA-2876) (Yeast).